The chain runs to 380 residues: Omega-3 fatty acid desaturase, endoplasmic reticulum (380 aa).

A helical transmembrane segment spans residues 59–78 (VLVVTALAASAISFNSWFFW). The Histidine box-1 motif lies at 97 to 101 (HDCGH). The Histidine box-2 motif lies at 133–137 (HRTHH). 2 helical membrane-spanning segments follow: residues 208-231 (GVVTSTLCWGIVLSVLLYLSLTIG) and 238-256 (LYGVPYLIFVMWLDFVTYL). The Histidine box-3 motif lies at 300-304 (HVIHH).

The protein belongs to the fatty acid desaturase type 1 family.

It localises to the endoplasmic reticulum membrane. The protein operates within lipid metabolism; polyunsaturated fatty acid biosynthesis. In terms of biological role, microsomal (ER) omega-3 fatty acid desaturase introduces the third double bond in the biosynthesis of 18:3 fatty acids, important constituents of plant membranes. It is thought to use cytochrome b5 as an electron donor and to act on fatty acids esterified to phosphatidylcholine and, possibly, other phospholipids. This is Omega-3 fatty acid desaturase, endoplasmic reticulum (ARG1) from Vigna radiata var. radiata (Mung bean).